Reading from the N-terminus, the 404-residue chain is Probable tRNA sulfurtransferase (404 aa).

The THUMP domain maps to 60–165 (QPIVEALKLV…DEAAYISYEE (106 aa)). ATP-binding positions include 183–184 (ML), 208–209 (HF), Arg265, Gly287, and Gln296.

It belongs to the ThiI family.

It localises to the cytoplasm. It carries out the reaction [ThiI sulfur-carrier protein]-S-sulfanyl-L-cysteine + a uridine in tRNA + 2 reduced [2Fe-2S]-[ferredoxin] + ATP + H(+) = [ThiI sulfur-carrier protein]-L-cysteine + a 4-thiouridine in tRNA + 2 oxidized [2Fe-2S]-[ferredoxin] + AMP + diphosphate. The catalysed reaction is [ThiS sulfur-carrier protein]-C-terminal Gly-Gly-AMP + S-sulfanyl-L-cysteinyl-[cysteine desulfurase] + AH2 = [ThiS sulfur-carrier protein]-C-terminal-Gly-aminoethanethioate + L-cysteinyl-[cysteine desulfurase] + A + AMP + 2 H(+). It participates in cofactor biosynthesis; thiamine diphosphate biosynthesis. Functionally, catalyzes the ATP-dependent transfer of a sulfur to tRNA to produce 4-thiouridine in position 8 of tRNAs, which functions as a near-UV photosensor. Also catalyzes the transfer of sulfur to the sulfur carrier protein ThiS, forming ThiS-thiocarboxylate. This is a step in the synthesis of thiazole, in the thiamine biosynthesis pathway. The sulfur is donated as persulfide by IscS. This chain is Probable tRNA sulfurtransferase, found in Streptococcus pyogenes serotype M4 (strain MGAS10750).